The chain runs to 210 residues: MSFGTLYTHNPTPRSTTLIALAKLHNLDVKIIHAEKKNKEAFEELCRYNPLGQVPTFVGADGFVLSECIPLTLYCNDERSSLRILQWMSFANSDLFPAVGGVFLPRIGQRQIIQQDDGDSLRAMLQRCKYLDEHLKRSRYLVGESITIADFFAASLLMGAFAAFRRSMQERFGALCSWYDGVLEIGWFKKVAGGVPDLGLELEIPEDIKW.

The region spanning serine 2–arginine 83 is the GST N-terminal domain. The 124-residue stretch at aspartate 77–leucine 200 folds into the GST C-terminal domain.

The protein belongs to the GST superfamily.

It participates in secondary metabolite biosynthesis. Glutathione S-transferase; part of the gene cluster that mediates the biosynthesis of monodictyphenone, a prenyl xanthone derivative. The pathway begins with the synthesis of atrochrysone thioester by the polyketide synthase (PKS) mdpG. The atrochrysone carboxyl ACP thioesterase mdpF then breaks the thioester bond and releases the atrochrysone carboxylic acid from mdpG. The atrochrysone carboxylic acid is then converted to atrochrysone which is further transformed into emodin anthrone. The next step is performed by the anthrone oxygenase mdpH that catalyzes the oxidation of emodinanthrone to emodin. Emodin is further modified to yield monodictyphenone via several steps involving mdpB, mdpC mdpJ, mdpK and mdpL. These enzymes with xptA, xptB and xptC are also proposed to be involved in the synthesis of shamixanthone from emodin. Especially, direct reduction of emodin by the short chain dehydrogenase mdpC followed by dehydration catalyzed by the scytalone dehydratase-like protein mdpB gives loss of oxygen and formation of chrysophanol intermediate in two simple steps. The polypeptide is Glutathione S-transferase mdpJ (Emericella nidulans (strain FGSC A4 / ATCC 38163 / CBS 112.46 / NRRL 194 / M139) (Aspergillus nidulans)).